Here is a 234-residue protein sequence, read N- to C-terminus: UPF0441 protein plu3956 (234 aa).

Disordered stretches follow at residues 105 to 129 (QAGL…QQSG) and 149 to 234 (SAPS…SVGG). Positions 110–127 (TTTSSTSTNGEAQAQQQQ) are enriched in low complexity. The span at 150 to 175 (APSQPLFSSKSATSPANGQFVDSTGK) shows a compositional bias: polar residues. Low complexity-rich tracts occupy residues 188 to 205 (TVPK…TTIT) and 216 to 234 (QSTM…SVGG).

Belongs to the UPF0441 family.

The sequence is that of UPF0441 protein plu3956 from Photorhabdus laumondii subsp. laumondii (strain DSM 15139 / CIP 105565 / TT01) (Photorhabdus luminescens subsp. laumondii).